The chain runs to 259 residues: UPF0246 protein Pmen_1032 (259 aa).

This sequence belongs to the UPF0246 family.

This Ectopseudomonas mendocina (strain ymp) (Pseudomonas mendocina) protein is UPF0246 protein Pmen_1032.